Reading from the N-terminus, the 83-residue chain is Small ribosomal subunit protein eS21 (83 aa).

It belongs to the eukaryotic ribosomal protein eS21 family. Component of the 40S small ribosomal subunit. Interacts with sta.

The protein resides in the cytoplasm. It is found in the cytosol. It localises to the rough endoplasmic reticulum. Functionally, may be an associated component of the ribosome rather than a core structural subunit. May act as a translation initiation factor. Has a role in regulation of cell proliferation in the hematopoietic organs and the imaginal disks of larva. The sequence is that of Small ribosomal subunit protein eS21 (RpS21) from Drosophila simulans (Fruit fly).